A 162-amino-acid chain; its full sequence is Peptidyl-prolyl cis-trans isomerase-like 1 (162 aa).

Positions 1-155 (MATDVAFDTS…DGVKILRARI (155 aa)) constitute a PPIase cyclophilin-type domain.

It belongs to the cyclophilin-type PPIase family. PPIL1 subfamily.

The enzyme catalyses [protein]-peptidylproline (omega=180) = [protein]-peptidylproline (omega=0). In terms of biological role, PPIases accelerate the folding of proteins. It catalyzes the cis-trans isomerization of proline imidic peptide bonds in oligopeptides. This chain is Peptidyl-prolyl cis-trans isomerase-like 1 (cypC), found in Aspergillus niger.